Here is a 208-residue protein sequence, read N- to C-terminus: Small ribosomal subunit protein uS4 (208 aa).

The region spanning 98 to 161 is the S4 RNA-binding domain; it reads QRLDNVVYRM…KNNPQIVRAI (64 aa).

Belongs to the universal ribosomal protein uS4 family. Part of the 30S ribosomal subunit. Contacts protein S5. The interaction surface between S4 and S5 is involved in control of translational fidelity.

One of the primary rRNA binding proteins, it binds directly to 16S rRNA where it nucleates assembly of the body of the 30S subunit. In terms of biological role, with S5 and S12 plays an important role in translational accuracy. This Campylobacter concisus (strain 13826) protein is Small ribosomal subunit protein uS4.